We begin with the raw amino-acid sequence, 251 residues long: Ubiquinone/menaquinone biosynthesis C-methyltransferase UbiE (251 aa).

S-adenosyl-L-methionine contacts are provided by residues Thr74, Asp95, and 123–124 (NA).

This sequence belongs to the class I-like SAM-binding methyltransferase superfamily. MenG/UbiE family.

It carries out the reaction a 2-demethylmenaquinol + S-adenosyl-L-methionine = a menaquinol + S-adenosyl-L-homocysteine + H(+). The enzyme catalyses a 2-methoxy-6-(all-trans-polyprenyl)benzene-1,4-diol + S-adenosyl-L-methionine = a 5-methoxy-2-methyl-3-(all-trans-polyprenyl)benzene-1,4-diol + S-adenosyl-L-homocysteine + H(+). It participates in quinol/quinone metabolism; menaquinone biosynthesis; menaquinol from 1,4-dihydroxy-2-naphthoate: step 2/2. Its pathway is cofactor biosynthesis; ubiquinone biosynthesis. In terms of biological role, methyltransferase required for the conversion of demethylmenaquinol (DMKH2) to menaquinol (MKH2) and the conversion of 2-polyprenyl-6-methoxy-1,4-benzoquinol (DDMQH2) to 2-polyprenyl-3-methyl-6-methoxy-1,4-benzoquinol (DMQH2). This chain is Ubiquinone/menaquinone biosynthesis C-methyltransferase UbiE, found in Marinomonas sp. (strain MWYL1).